Reading from the N-terminus, the 277-residue chain is Putative phosphoenolpyruvate synthase regulatory protein (277 aa).

157 to 164 is an ADP binding site; that stretch reads GVSRCGKT.

The protein belongs to the pyruvate, phosphate/water dikinase regulatory protein family. PSRP subfamily.

The enzyme catalyses [pyruvate, water dikinase] + ADP = [pyruvate, water dikinase]-phosphate + AMP + H(+). It carries out the reaction [pyruvate, water dikinase]-phosphate + phosphate + H(+) = [pyruvate, water dikinase] + diphosphate. Functionally, bifunctional serine/threonine kinase and phosphorylase involved in the regulation of the phosphoenolpyruvate synthase (PEPS) by catalyzing its phosphorylation/dephosphorylation. The chain is Putative phosphoenolpyruvate synthase regulatory protein from Photobacterium profundum (strain SS9).